We begin with the raw amino-acid sequence, 1719 residues long: 5'-3' exoribonuclease 1 (1719 aa).

Residues 1268 to 1298 are compositionally biased toward basic and acidic residues; sequence HKSGFTDHSVRHQQRKHDSQRKFKEEYKSPK. The segment at 1268-1317 is disordered; it reads HKSGFTDHSVRHQQRKHDSQRKFKEEYKSPKAECQSQKLSSKQTSGGSAR. Over residues 1301–1314 the composition is skewed to polar residues; sequence CQSQKLSSKQTSGG. Phosphoserine is present on S1382. The segment covering 1397-1430 has biased composition (basic and acidic residues); that stretch reads ILKIDSPDTRDSKNDMKKSDNEATVSSRRDERGV. Disordered stretches follow at residues 1397 to 1445 and 1634 to 1719; these read ILKI…KPHG and ENKE…KPSE. Residues 1638-1660 are compositionally biased toward polar residues; the sequence is AQSSQATPLQTNKPGSSEATKMT. Residues 1661-1680 show a composition bias toward low complexity; it reads PQESPPASSSSSQAAQPVSS. Residues 1681–1690 are compositionally biased toward polar residues; the sequence is HVETASQGHV.

It belongs to the 5'-3' exonuclease family. As to quaternary structure, found in a mRNP complex with UPF1, UPF2, UPF3B and XRN1. Associates with alpha and beta tubulins. Interacts with DIS3L2. Interacts with ZC3HAV1 in an RNA-dependent manner. Interacts with ZFP36L1. Interacts with TRIM71 (via NHL repeats) in an RNA-dependent manner. Interacts with YTHDC2 (via ANK repeats). Interacts with DHX34; the interaction is RNA-independent. In terms of tissue distribution, expressed in heart, brain (spinal cord, dorsal root and superior cervical ganglia, neurons of the cerebrum and brain stem), peripheral nerve fibers in the skin and intestine, spleen, lung, liver, skeletal muscle, kidney and testis.

It is found in the cytoplasm. Its function is as follows. Major 5'-3' exoribonuclease involved in mRNA decay. Required for the 5'-3'-processing of the G4 tetraplex-containing DNA and RNA substrates. The kinetic of hydrolysis is faster for G4 RNA tetraplex than for G4 DNA tetraplex and monomeric RNA tetraplex. Binds to RNA and DNA. Plays a role in replication-dependent histone mRNA degradation. In Mus musculus (Mouse), this protein is 5'-3' exoribonuclease 1.